A 218-amino-acid polypeptide reads, in one-letter code: Pyridoxine/pyridoxamine 5'-phosphate oxidase (218 aa).

Substrate contacts are provided by residues 14–17 (RREY) and lysine 72. Residues 67–72 (RIVLLK), 82–83 (YT), arginine 88, lysine 89, and glutamine 111 contribute to the FMN site. Tyrosine 129, arginine 133, and serine 137 together coordinate substrate. FMN-binding positions include 146 to 147 (QS) and tryptophan 191. Substrate is bound at residue 197 to 199 (RLH). Residue arginine 201 participates in FMN binding.

It belongs to the pyridoxamine 5'-phosphate oxidase family. In terms of assembly, homodimer. It depends on FMN as a cofactor.

It catalyses the reaction pyridoxamine 5'-phosphate + O2 + H2O = pyridoxal 5'-phosphate + H2O2 + NH4(+). The enzyme catalyses pyridoxine 5'-phosphate + O2 = pyridoxal 5'-phosphate + H2O2. Its pathway is cofactor metabolism; pyridoxal 5'-phosphate salvage; pyridoxal 5'-phosphate from pyridoxamine 5'-phosphate: step 1/1. It participates in cofactor metabolism; pyridoxal 5'-phosphate salvage; pyridoxal 5'-phosphate from pyridoxine 5'-phosphate: step 1/1. Functionally, catalyzes the oxidation of either pyridoxine 5'-phosphate (PNP) or pyridoxamine 5'-phosphate (PMP) into pyridoxal 5'-phosphate (PLP). The polypeptide is Pyridoxine/pyridoxamine 5'-phosphate oxidase (Citrobacter koseri (strain ATCC BAA-895 / CDC 4225-83 / SGSC4696)).